Consider the following 310-residue polypeptide: Methionyl-tRNA formyltransferase (310 aa).

109–112 (SLLP) contributes to the (6S)-5,6,7,8-tetrahydrofolate binding site.

The protein belongs to the Fmt family.

The catalysed reaction is L-methionyl-tRNA(fMet) + (6R)-10-formyltetrahydrofolate = N-formyl-L-methionyl-tRNA(fMet) + (6S)-5,6,7,8-tetrahydrofolate + H(+). Attaches a formyl group to the free amino group of methionyl-tRNA(fMet). The formyl group appears to play a dual role in the initiator identity of N-formylmethionyl-tRNA by promoting its recognition by IF2 and preventing the misappropriation of this tRNA by the elongation apparatus. The sequence is that of Methionyl-tRNA formyltransferase from Staphylococcus epidermidis (strain ATCC 12228 / FDA PCI 1200).